The chain runs to 629 residues: Ionotropic receptor 75a (629 aa).

The Extracellular segment spans residues 1-335 (MQLVQLANFV…GDVFLQPFSP (335 aa)). N-linked (GlcNAc...) asparagine glycosylation is found at N61, N112, N126, N144, N166, and N232. The helical transmembrane segment at 336–356 (LVWYLFGGVLSLIGVLLWITF) threads the bilayer. The Cytoplasmic portion of the chain corresponds to 357–374 (YMECKRMQKRWRLDYLPS). Residues 375 to 395 (LLSTFLISFGAACIQSSSLIP) traverse the membrane as a helical segment. Over 396–402 (RSAGGRL) the chain is Extracellular. Residues 403 to 423 (IYFALFLISFIMYNYYTSVVV) traverse the membrane as a helical segment. Residues 424–592 (SSLLSSPVKS…NFVITVGMEY (169 aa)) are Cytoplasmic-facing. Residues 593–613 (VAPLLLMLICADILVVVILLV) form a helical membrane-spanning segment. Residues 614 to 629 (ELAWKRFFTRHLTFHP) are Extracellular-facing.

Belongs to the glutamate-gated ion channel (TC 1.A.10.1) family. As to expression, expressed in acetic-acid-sensing neurons in the antennal coeloconic 2 (ac2) and antennal coeloconic 3 (ac3) sensilla class of sensory hairs (at protein level).

It localises to the cell membrane. It is found in the cell projection. Its subcellular location is the dendrite. Functionally, odorant receptor for acetic and propionic acid. Functions as part of an olfactory receptor complex including the ionotropic receptor coreceptor Ir8a. The chain is Ionotropic receptor 75a from Drosophila melanogaster (Fruit fly).